A 911-amino-acid chain; its full sequence is Protein translocase subunit SecA (911 aa).

Residues glutamine 86, 104-108 (GEGKT), and aspartate 512 contribute to the ATP site. The disordered stretch occupies residues 869–888 (ALADDGQPQGAQPVRNVLPK). Zn(2+) is bound by residues cysteine 895, cysteine 897, cysteine 906, and histidine 907.

Belongs to the SecA family. In terms of assembly, monomer and homodimer. Part of the essential Sec protein translocation apparatus which comprises SecA, SecYEG and auxiliary proteins SecDF-YajC and YidC. Requires Zn(2+) as cofactor.

Its subcellular location is the cell inner membrane. It is found in the cytoplasm. It catalyses the reaction ATP + H2O + cellular proteinSide 1 = ADP + phosphate + cellular proteinSide 2.. Its function is as follows. Part of the Sec protein translocase complex. Interacts with the SecYEG preprotein conducting channel. Has a central role in coupling the hydrolysis of ATP to the transfer of proteins into and across the cell membrane, serving both as a receptor for the preprotein-SecB complex and as an ATP-driven molecular motor driving the stepwise translocation of polypeptide chains across the membrane. The polypeptide is Protein translocase subunit SecA (Bordetella parapertussis (strain 12822 / ATCC BAA-587 / NCTC 13253)).